Consider the following 89-residue polypeptide: Small ribosomal subunit protein uS15 (89 aa).

The protein belongs to the universal ribosomal protein uS15 family. In terms of assembly, part of the 30S ribosomal subunit. Forms a bridge to the 50S subunit in the 70S ribosome, contacting the 23S rRNA.

Functionally, one of the primary rRNA binding proteins, it binds directly to 16S rRNA where it helps nucleate assembly of the platform of the 30S subunit by binding and bridging several RNA helices of the 16S rRNA. Its function is as follows. Forms an intersubunit bridge (bridge B4) with the 23S rRNA of the 50S subunit in the ribosome. This chain is Small ribosomal subunit protein uS15, found in Acidithiobacillus ferrooxidans (strain ATCC 23270 / DSM 14882 / CIP 104768 / NCIMB 8455) (Ferrobacillus ferrooxidans (strain ATCC 23270)).